A 271-amino-acid chain; its full sequence is Calretinin (271 aa).

EF-hand domains are found at residues 16–51 (LTAT…LEKA), 63–98 (NLGE…EENF), 107–142 (GSST…LLKK), 151–186 (KLQE…QENF), 195–230 (LTSE…LYEK), and 235–270 (MNIQ…SEPP). Aspartate 29, aspartate 31, asparagine 33, tyrosine 35, glutamate 40, aspartate 76, asparagine 78, aspartate 80, lysine 82, glutamate 87, aspartate 120, aspartate 122, serine 124, tyrosine 126, glutamate 131, aspartate 164, asparagine 166, aspartate 168, lysine 170, glutamate 175, aspartate 208, aspartate 210, serine 212, tyrosine 214, and glutamate 219 together coordinate Ca(2+). At tyrosine 214 the chain carries Phosphotyrosine.

It belongs to the calbindin family.

Its subcellular location is the synapse. The protein localises to the cell projection. It is found in the dendrite. Functionally, calcium-binding protein involved in calcium homeostasis and signal transduction. It plays a critical role in buffering intracellular calcium levels and modulating calcium-dependent signaling pathways. Predominantly expressed in specific neuronal populations, influences synaptic plasticity and neuronal excitability, contributing to learning and memory. During embryonic development, it facilitates neuronal differentiation and maturation. This Bos taurus (Bovine) protein is Calretinin (CALB2).